The following is a 206-amino-acid chain: Threonine efflux protein (206 aa).

The helical transmembrane segment at 1–21 (MMMLFFTVAMVHIVALMSPGP) threads the bilayer. Over 22–43 (DFFFVSQTAVSRSRKEAMMGVL) the chain is Periplasmic. The helical transmembrane segment at 44-64 (GITCGVMVWAGVALLGLHLII) threads the bilayer. Residues 65–66 (EK) are Cytoplasmic-facing. The chain crosses the membrane as a helical span at residues 67-87 (MAWLHTIIMVGGGLYLCWMGY). The Periplasmic portion of the chain corresponds to 88-149 (QMLRGALKKQ…VGDNVGAAAR (62 aa)). The helical transmembrane segment at 150–173 (WGIFALITLETLAWFTVVASLFAL) threads the bilayer. At 174 to 206 (PKMRRGYQRLAKWIDGFAGALFAGFGIHLIISR) the chain is on the cytoplasmic side.

Belongs to the Rht family.

Its subcellular location is the cell inner membrane. Its function is as follows. Conducts the efflux of threonine. In Salmonella typhimurium (strain LT2 / SGSC1412 / ATCC 700720), this protein is Threonine efflux protein (rhtC).